Reading from the N-terminus, the 367-residue chain is UDP-N-acetylglucosamine--N-acetylmuramyl-(pentapeptide) pyrophosphoryl-undecaprenol N-acetylglucosamine transferase (367 aa).

UDP-N-acetyl-alpha-D-glucosamine contacts are provided by residues 15–17 (TGG), N127, R163, S191, I249, and Q294.

This sequence belongs to the glycosyltransferase 28 family. MurG subfamily.

The protein resides in the cell inner membrane. It catalyses the reaction di-trans,octa-cis-undecaprenyl diphospho-N-acetyl-alpha-D-muramoyl-L-alanyl-D-glutamyl-meso-2,6-diaminopimeloyl-D-alanyl-D-alanine + UDP-N-acetyl-alpha-D-glucosamine = di-trans,octa-cis-undecaprenyl diphospho-[N-acetyl-alpha-D-glucosaminyl-(1-&gt;4)]-N-acetyl-alpha-D-muramoyl-L-alanyl-D-glutamyl-meso-2,6-diaminopimeloyl-D-alanyl-D-alanine + UDP + H(+). It participates in cell wall biogenesis; peptidoglycan biosynthesis. Its function is as follows. Cell wall formation. Catalyzes the transfer of a GlcNAc subunit on undecaprenyl-pyrophosphoryl-MurNAc-pentapeptide (lipid intermediate I) to form undecaprenyl-pyrophosphoryl-MurNAc-(pentapeptide)GlcNAc (lipid intermediate II). The polypeptide is UDP-N-acetylglucosamine--N-acetylmuramyl-(pentapeptide) pyrophosphoryl-undecaprenol N-acetylglucosamine transferase (Burkholderia vietnamiensis (strain G4 / LMG 22486) (Burkholderia cepacia (strain R1808))).